We begin with the raw amino-acid sequence, 332 residues long: Galectin-4 (332 aa).

2 consecutive Galectin domains span residues 19–150 (YHNP…INFI) and 203–332 (FNGR…YVQI). 265 to 271 (WGSEERK) lines the a beta-D-galactoside pocket. Phosphoserine is present on Ser-267.

In terms of assembly, monomer.

Its function is as follows. Galectin that binds lactose and a related range of sugars. May be involved in the assembly of adherens junctions. In Bos taurus (Bovine), this protein is Galectin-4 (LGALS4).